A 651-amino-acid chain; its full sequence is Acetyl-coenzyme A synthetase (651 aa).

CoA-binding positions include 189 to 192, Thr-311, and Asn-335; that span reads RGGK. ATP contacts are provided by residues 387–389, 411–416, Asp-500, and Arg-515; these read GEP and DTWWQT. Ser-523 is a CoA binding site. An ATP-binding site is contributed by Arg-526. Residues Val-537, His-539, and Val-542 each contribute to the Mg(2+) site. Arg-584 serves as a coordination point for CoA. At Lys-609 the chain carries N6-acetyllysine.

The protein belongs to the ATP-dependent AMP-binding enzyme family. Mg(2+) is required as a cofactor. In terms of processing, acetylated. Deacetylation by the SIR2-homolog deacetylase activates the enzyme.

It carries out the reaction acetate + ATP + CoA = acetyl-CoA + AMP + diphosphate. Catalyzes the conversion of acetate into acetyl-CoA (AcCoA), an essential intermediate at the junction of anabolic and catabolic pathways. AcsA undergoes a two-step reaction. In the first half reaction, AcsA combines acetate with ATP to form acetyl-adenylate (AcAMP) intermediate. In the second half reaction, it can then transfer the acetyl group from AcAMP to the sulfhydryl group of CoA, forming the product AcCoA. The protein is Acetyl-coenzyme A synthetase of Rhizobium etli (strain CIAT 652).